Here is a 714-residue protein sequence, read N- to C-terminus: RB-associated KRAB zinc finger protein (714 aa).

The KRAB domain maps to 8-79; sequence VSFKDVAVDF…GGEFPCQHSP (72 aa). Residues K97 and K259 each participate in a glycyl lysine isopeptide (Lys-Gly) (interchain with G-Cter in SUMO2) cross-link. The required for interaction with RB1 stretch occupies residues 171-260; sequence TYHGEKMCEF…YQRSQMEMKP (90 aa). C2H2-type zinc fingers lie at residues 261–283 and 289–311; these read FECS…QRAH and YECN…RRSH. K315 participates in a covalent cross-link: Glycyl lysine isopeptide (Lys-Gly) (interchain with G-Cter in SUMO2). 7 consecutive C2H2-type zinc fingers follow at residues 317 to 339, 345 to 367, 373 to 395, 401 to 423, 429 to 451, 457 to 479, and 485 to 505; these read YKCN…LRTH, YECS…QRNH, YPCN…QRTH, YKCN…QRTH, YQCS…YRSH, YECN…RKVH, and HECS…HTAH. Residue K357 forms a Glycyl lysine isopeptide (Lys-Gly) (interchain with G-Cter in SUMO2) linkage. The interval 417–714 is interaction with AR; it reads ITHQRTHTGE…NMNVLDVENL (298 aa). The C2H2-type 10; degenerate zinc finger occupies 511 to 533; sequence YECNECGKTFLVNSAFDGHQPLP. Residues K534 and K537 each participate in a glycyl lysine isopeptide (Lys-Gly) (interchain with G-Cter in SUMO2) cross-link. C2H2-type zinc fingers lie at residues 539-561, 567-589, 595-617, 623-645, 651-673, and 679-701; these read YECN…YRSH, YGCS…QRVH, YECY…HRIH, YECS…YRSH, YECN…YRTH, and YECN…QRIH.

Belongs to the krueppel C2H2-type zinc-finger protein family. Interacts with AR and RB1. May also interact with other nuclear hormone receptors such as NR3C1/GR. Expressed in bone, brain, heart, kidney, liver, lung, pancreas and placenta.

The protein localises to the nucleus. Functionally, may repress E2F-dependent transcription. May promote AR-dependent transcription. The sequence is that of RB-associated KRAB zinc finger protein (RBAK) from Homo sapiens (Human).